The sequence spans 206 residues: Large ribosomal subunit protein uL4 (206 aa).

It belongs to the universal ribosomal protein uL4 family. Part of the 50S ribosomal subunit.

In terms of biological role, one of the primary rRNA binding proteins, this protein initially binds near the 5'-end of the 23S rRNA. It is important during the early stages of 50S assembly. It makes multiple contacts with different domains of the 23S rRNA in the assembled 50S subunit and ribosome. Its function is as follows. Forms part of the polypeptide exit tunnel. This chain is Large ribosomal subunit protein uL4, found in Methylorubrum extorquens (strain CM4 / NCIMB 13688) (Methylobacterium extorquens).